The sequence spans 277 residues: NH(3)-dependent NAD(+) synthetase (277 aa).

ATP is bound at residue 46–53 (GISGGQDS). Asp-52 provides a ligand contact to Mg(2+). Arg-142 provides a ligand contact to deamido-NAD(+). Thr-162 contributes to the ATP binding site. Glu-167 is a Mg(2+) binding site. Deamido-NAD(+) is bound by residues Lys-175 and Asp-182. ATP-binding residues include Lys-191 and Thr-213. 263–264 (HK) serves as a coordination point for deamido-NAD(+).

It belongs to the NAD synthetase family. As to quaternary structure, homodimer.

It carries out the reaction deamido-NAD(+) + NH4(+) + ATP = AMP + diphosphate + NAD(+) + H(+). It participates in cofactor biosynthesis; NAD(+) biosynthesis; NAD(+) from deamido-NAD(+) (ammonia route): step 1/1. Functionally, catalyzes the ATP-dependent amidation of deamido-NAD to form NAD. Uses ammonia as a nitrogen source. The chain is NH(3)-dependent NAD(+) synthetase from Corynebacterium glutamicum (strain R).